The following is a 138-amino-acid chain: Larval cuticle protein 1 (138 aa).

Positions 1-16 (MFKFVMVFAVLGVAAA) are cleaved as a signal peptide. One can recognise a Chitin-binding type R&amp;R domain in the interval 49 to 110 (ADGFDADLLV…PVGAVLPTPP (62 aa)).

Component of the larval cuticle. This is Larval cuticle protein 1 (Lcp1) from Drosophila miranda (Fruit fly).